Reading from the N-terminus, the 435-residue chain is Serine--tRNA ligase (435 aa).

L-serine is bound at residue 242–244; that stretch reads TAE. 273 to 275 is an ATP binding site; the sequence is RSE. Glu296 serves as a coordination point for L-serine. An ATP-binding site is contributed by 360–363; the sequence is EISS. Ser396 contributes to the L-serine binding site.

This sequence belongs to the class-II aminoacyl-tRNA synthetase family. Type-1 seryl-tRNA synthetase subfamily. In terms of assembly, homodimer. The tRNA molecule binds across the dimer.

Its subcellular location is the cytoplasm. The enzyme catalyses tRNA(Ser) + L-serine + ATP = L-seryl-tRNA(Ser) + AMP + diphosphate + H(+). It catalyses the reaction tRNA(Sec) + L-serine + ATP = L-seryl-tRNA(Sec) + AMP + diphosphate + H(+). Its pathway is aminoacyl-tRNA biosynthesis; selenocysteinyl-tRNA(Sec) biosynthesis; L-seryl-tRNA(Sec) from L-serine and tRNA(Sec): step 1/1. In terms of biological role, catalyzes the attachment of serine to tRNA(Ser). Is also able to aminoacylate tRNA(Sec) with serine, to form the misacylated tRNA L-seryl-tRNA(Sec), which will be further converted into selenocysteinyl-tRNA(Sec). The chain is Serine--tRNA ligase from Vibrio parahaemolyticus serotype O3:K6 (strain RIMD 2210633).